The sequence spans 352 residues: Uricase (352 aa).

A disordered region spans residues 1–32; the sequence is MFATPLRQPAAANHQTPKNSAGMDEHGKPYQY. Over residues 23 to 32 the composition is skewed to basic and acidic residues; sequence MDEHGKPYQY. Catalysis depends on charge relay system residues lysine 41 and threonine 86. Urate-binding residues include threonine 86, aspartate 87, phenylalanine 214, arginine 231, valine 279, glutamine 280, and asparagine 306. The Charge relay system role is filled by histidine 308. Positions 350-352 match the Microbody targeting signal motif; that stretch reads SHL.

This sequence belongs to the uricase family. As to expression, malpighian tubules.

The protein resides in the peroxisome. The enzyme catalyses urate + O2 + H2O = 5-hydroxyisourate + H2O2. Its pathway is purine metabolism; urate degradation; (S)-allantoin from urate: step 1/3. Repressed by 20-hydroxyecdysone. Functionally, catalyzes the oxidation of uric acid to 5-hydroxyisourate, which is further processed to form (S)-allantoin. In Drosophila melanogaster (Fruit fly), this protein is Uricase (Uro).